A 541-amino-acid chain; its full sequence is Putative transferase YhbX (541 aa).

Residues methionine 1–arginine 60 are Periplasmic-facing. The chain crosses the membrane as a helical span at residues leucine 61–serine 81. The Cytoplasmic segment spans residues tryptophan 82–glycine 110. Residues methionine 111 to isoleucine 131 form a helical membrane-spanning segment. Residues lysine 132–lysine 141 are Periplasmic-facing. A helical transmembrane segment spans residues valine 142 to alanine 162. Over tyrosine 163–alanine 264 the chain is Cytoplasmic. The chain crosses the membrane as a helical span at residues isoleucine 265–leucine 285. Residues serine 286 to glycine 541 lie on the Periplasmic side of the membrane.

Belongs to the phosphoethanolamine transferase family.

Its subcellular location is the cell inner membrane. Probably does not transfer phosphoethanolamine to lipid A. The polypeptide is Putative transferase YhbX (yhbX) (Escherichia coli (strain K12)).